A 292-amino-acid polypeptide reads, in one-letter code: Retinal homeobox protein Rx3 (292 aa).

The disordered stretch occupies residues 1 to 27; the sequence is MRLVGSQYKDMEDRLSPSARLVRSPGS. Residues 32 to 39 carry the Octapeptide motif motif; it reads HSIESILG. Disordered regions lie at residues 53–72 and 85–107; these read GSGKTGKDTEHLSPKKDSNK and SPDLPDADGGKLSDDENPKKKHR. Composition is skewed to basic and acidic residues over residues 57–72 and 92–102; these read TGKDTEHLSPKKDSNK and DGGKLSDDENP. The segment at residues 106–165 is a DNA-binding region (homeobox); that stretch reads HRRNRTTFTTFQLHELERAFEKSHYPDVYSREELALKVNLPEVRVQVWFQNRRAKWRRQE. The OAR motif lies at 272 to 285; that stretch reads TSIASLRMKAKEHI. The short motif at 278–282 is the Nuclear localization signal element; that stretch reads RMKAK.

It belongs to the paired homeobox family. Bicoid subfamily.

It is found in the nucleus. Plays a critical role in eye formation by regulating the initial specification of retinal cells and/or their subsequent proliferation. This Danio rerio (Zebrafish) protein is Retinal homeobox protein Rx3 (rx3).